The chain runs to 463 residues: Metacaspase-1 (463 aa).

Residues 1–149 (MSWNQYPGGG…PQLQGQGGQS (149 aa)) form a disordered region. Gly residues predominate over residues 7-18 (PGGGHHQQGGYG). Residues 20–56 (RPPPPQWAQQGPPPPPNMGYRPPPPPQAYYNNPPPPQ) are compositionally biased toward pro residues. Positions 57 to 83 (QYQRPAPQQNGYQQGGYQQQQQSQGNY) are enriched in low complexity. Residues His247 and Cys309 contribute to the active site.

The protein belongs to the peptidase C14B family.

In terms of biological role, involved in cell death (apoptosis). In Cryptococcus neoformans var. neoformans serotype D (strain B-3501A) (Filobasidiella neoformans), this protein is Metacaspase-1 (MCA1).